A 79-amino-acid chain; its full sequence is Defensin-like protein 117 (79 aa).

A signal peptide spans 1-24 (MTTTKTMLVAFVLTLFFVISSVHC). 4 cysteine pairs are disulfide-bonded: C40-C75, C46-C68, C53-C73, and C57-C74.

It belongs to the DEFL family.

It is found in the secreted. This is Defensin-like protein 117 from Arabidopsis thaliana (Mouse-ear cress).